A 327-amino-acid chain; its full sequence is uncharacterized protein (327 aa).

Residues 12–79 (KRLDEFLAKE…LKKELDLEIE (68 aa)) enclose the S4 RNA-binding domain. Residue D136 is part of the active site.

This sequence belongs to the pseudouridine synthase RluA family.

It carries out the reaction a uridine in RNA = a pseudouridine in RNA. This is an uncharacterized protein from Helicobacter pylori (strain ATCC 700392 / 26695) (Campylobacter pylori).